Reading from the N-terminus, the 428-residue chain is Aspartate--tRNA(Asp) ligase (428 aa).

Glutamate 166 contacts L-aspartate. Residues 188–191 form an aspartate region; it reads QLYK. Arginine 210 is an L-aspartate binding site. ATP-binding positions include 210–212, 218–220, and glutamate 351; these read RAE and RHL. Glutamate 351 and serine 354 together coordinate Mg(2+). L-aspartate-binding residues include serine 354 and arginine 358. Position 399 to 402 (399 to 402) interacts with ATP; that stretch reads GLER.

This sequence belongs to the class-II aminoacyl-tRNA synthetase family. Type 2 subfamily. As to quaternary structure, homodimer. The cofactor is Mg(2+).

It localises to the cytoplasm. It catalyses the reaction tRNA(Asp) + L-aspartate + ATP = L-aspartyl-tRNA(Asp) + AMP + diphosphate. In terms of biological role, catalyzes the attachment of L-aspartate to tRNA(Asp) in a two-step reaction: L-aspartate is first activated by ATP to form Asp-AMP and then transferred to the acceptor end of tRNA(Asp). This chain is Aspartate--tRNA(Asp) ligase, found in Thermoplasma acidophilum (strain ATCC 25905 / DSM 1728 / JCM 9062 / NBRC 15155 / AMRC-C165).